A 920-amino-acid chain; its full sequence is Protein FAN (920 aa).

The GRAM domain maps to 176 to 247; it reads RLARTSFDKN…QDVRRIYKRR (72 aa). Positions 189-286 constitute a BEACH-type PH domain; it reads SVSEKLHMEC…DRDDLYFYIA (98 aa). A BEACH domain is found at 290–575; sequence EHHAAEHTAE…QLFVTPHPRR (286 aa). 6 WD repeats span residues 631 to 661, 673 to 703, 715 to 743, 764 to 794, 806 to 836, and 887 to 917; these read IHKE…KMFS, FSNM…YFYS, GHDD…KVWS, EHDV…NIWD, CHSG…NVID, and GHTG…MFWK.

Functionally, couples the p55 TNF-receptor (TNF-R55 / TNFR1) to neutral sphingomyelinase (N-SMASE). Specifically binds to the N-smase activation domain of TNF-R55. May regulate ceramide production by N-SMASE. This Mus musculus (Mouse) protein is Protein FAN (Nsmaf).